Here is a 533-residue protein sequence, read N- to C-terminus: Calcium/calmodulin-dependent protein kinase type II (533 aa).

ATP contacts are provided by residues 18-26 (LGKGAFSVV) and K41. D134 acts as the Proton acceptor in catalysis. T284 carries the phosphothreonine; by autocatalysis modification. 2 stretches are compositionally biased toward polar residues: residues 316-345 (TSDS…QPTS) and 377-391 (PPST…SQTI). Disordered stretches follow at residues 316–347 (TSDS…TSPA) and 369–400 (LLNK…EKAQ).

This sequence belongs to the protein kinase superfamily. CAMK Ser/Thr protein kinase family. CaMK subfamily. In terms of assembly, dodecamer. Subunits are tightly packed around a central ring-shaped scaffold with extensive contacts between the regulatory segment of one kinase and the catalytic domain of another enabling cooperative activation of a subunit by the adjacent molecule. Interacts with and phosphorylates daf-16; the interaction promotes daf-16 nuclear localization. Interacts with egl-2 and tir-1. Interacts with nsy-1. Requires Mg(2+) as cofactor.

It is found in the cytoplasm. Its subcellular location is the cell projection. The protein localises to the axon. It localises to the perikaryon. The enzyme catalyses L-seryl-[protein] + ATP = O-phospho-L-seryl-[protein] + ADP + H(+). The catalysed reaction is L-threonyl-[protein] + ATP = O-phospho-L-threonyl-[protein] + ADP + H(+). Its activity is regulated as follows. Ca(2+)/calmodulin binding removes an autoinhibitory regulatory segment located C-terminal to the kinase domain. This releases the catalytic activity of the enzyme and makes accessible a regulatory residue Thr-284. Phosphorylation of Thr-284 by another kinase domain within the oligomeric holoenzyme keeps CaMKII active in the absence of Ca(2+)/calmodulin by preventing the rebinding of the regulatory segment to the kinase domain and by increasing the affinity of calmodulin for the enzyme. Can respond to high-frequency Ca(2+) pulses to become Ca(2+) independent. Its function is as follows. Role in locomotion and neuronal cell fate specification. Required for the regulation of synaptic density, egg laying, defecation, and meiotic maturation. Required for viability under chronic osmotic stress in which it acts downstream of osr-1. Regulates the synaptic trafficking of glr-1. Bidirectional modulator of neurotransmitter release with negative modulatory effects mainly mediated via slo-1 activation. May suppress the functional response to an internal pacemaker, perhaps by modulating the activity of the IP3 receptor. This chain is Calcium/calmodulin-dependent protein kinase type II, found in Caenorhabditis briggsae.